Consider the following 2703-residue polypeptide: MQSQRSRRRSRAPNTWICFWINKMHAVASLPASLPLLLLTLAFANLPNTVRGTDTALVAASCTSVGCQNGGTCVTQLNGKTYCACDSHYVGDYCEHRNPCNSMRCQNGGTCQVTFRNGRPGISCKCPLGFDESLCEIAVPNACDHVTCLNGGTCQLKTLEEYTCACANGYTGERCETKNLCASSPCRNGATCTALAGSSSFTCSCPPGFTGDTCSYDIEECQSNPCKYGGTCVNTHGSYQCMCPTGYTGKDCDTKYKPCSPSPCQNGGICRSNGLSYECKCPKGFEGKNCEQNYDDCLGHLCQNGGTCIDGISDYTCRCPPNFTGRFCQDDVDECAQRDHPVCQNGATCTNTHGSYSCICVNGWAGLDCSNNTDDCKQAACFYGATCIDGVGSFYCQCTKGKTGLLCHLDDACTSNPCHADAICDTSPINGSYACSCATGYKGVDCSEDIDECDQGSPCEHNGICVNTPGSYRCNCSQGFTGPRCETNINECESHPCQNEGSCLDDPGTFRCVCMPGFTGTQCEIDIDECQSNPCLNDGTCHDKINGFKCSCALGFTGARCQINIDDCQSQPCRNRGICHDSIAGYSCECPPGYTGTSCEININDCDSNPCHRGKCIDDVNSFKCLCDPGYTGYICQKQINECESNPCQFDGHCQDRVGSYYCQCQAGTSGKNCEVNVNECHSNPCNNGATCIDGINSYKCQCVPGFTGQHCEKNVDECISSPCANNGVCIDQVNGYKCECPRGFYDAHCLSDVDECASNPCVNEGRCEDGINEFICHCPPGYTGKRCELDIDECSSNPCQHGGTCYDKLNAFSCQCMPGYTGQKCETNIDDCVTNPCGNGGTCIDKVNGYKCVCKVPFTGRDCESKMDPCASNRCKNEAKCTPSSNFLDFSCTCKLGYTGRYCDEDIDECSLSSPCRNGASCLNVPGSYRCLCTKGYEGRDCAINTDDCASFPCQNGGTCLDGIGDYSCLCVDGFDGKHCETDINECLSQPCQNGATCSQYVNSYTCTCPLGFSGINCQTNDEDCTESSCLNGGSCIDGINGYNCSCLAGYSGANCQYKLNKCDSNPCLNGATCHEQNNEYTCHCPSGFTGKQCSEYVDWCGQSPCENGATCSQMKHQFSCKCSAGWTGKLCDVQTISCQDAADRKGLSLRQLCNNGTCKDYGNSHVCYCSQGYAGSYCQKEIDECQSQPCQNGGTCRDLIGAYECQCRQGFQGQNCELNIDDCAPNPCQNGGTCHDRVMNFSCSCPPGTMGIICEINKDDCKPGACHNNGSCIDRVGGFECVCQPGFVGARCEGDINECLSNPCSNAGTLDCVQLVNNYHCNCRPGHMGRHCEHKVDFCAQSPCQNGGNCNIRQSGHHCICNNGFYGKNCELSGQDCDSNPCRVGNCVVADEGFGYRCECPRGTLGEHCEIDTLDECSPNPCAQGAACEDLLGDYECLCPSKWKGKRCDIYDANYPGWNGGSGSGNDRYAADLEQQRAMCDKRGCTEKQGNGICDSDCNTYACNFDGNDCSLGINPWANCTANECWNKFKNGKCNEECNNAACHYDGHDCERKLKSCDSLFDAYCQKHYGDGFCDYGCNNAECSWDGLDCENKTQSPVLAEGAMSVVMLMNVEAFREIQAQFLRNMSHMLRTTVRLKKDALGHDIIINWKDNVRVPEIEDTDFARKNKILYTQQVHQTGIQIYLEIDNRKCTECFTHAVEAAEFLAATAAKHQLRNDFQIHSVRGIKNPGDEDNGEPPANVKYVITGIILVIIALAFFGMVLSTQRKRAHGVTWFPEGFRAPAAVMSRRRRDPHGQEMRNLNKQVAMQSQGVGQPGAHWSDDESDMPLPKRQRSDPVSGVGLGNNGGYASDHTMVSEYEEADQRVWSQAHLDVVDVRAIMTPPAHQDGGKHDVDARGPCGLTPLMIAAVRGGGLDTGEDIENNEDSTAQVISDLLAQGAELNATMDKTGETSLHLAARFARADAAKRLLDAGADANCQDNTGRTPLHAAVAADAMGVFQILLRNRATNLNARMHDGTTPLILAARLAIEGMVEDLITADADINAADNSGKTALHWAAAVNNTEAVNILLMHHANRDAQDDKDETPLFLAAREGSYEACKALLDNFANREITDHMDRLPRDVASERLHHDIVRLLDEHVPRSPQMLSMTPQAMIGSPPPGQQQPQLITQPTVISAGNGGNNGNGNASGKQSNQTAKQKAAKKAKLIEGSPDNGLDATGSLRRKASSKKTSAASKKAANLNGLNPGQLTGGVSGVPGVPPTNSAAQAAAAAAAAVAAMSHELEGSPVGVGMGGNLPSPYDTSSMYSNAMAAPLANGNPNTGAKQPPSYEDCIKNAQSMQSLQGNGLDMIKLDNYAYSMGSPFQQELLNGQGLGMNGNGQRNGVGPGVLPGGLCGMGGLSGAGNGNSHEQGLSPPYSNQSPPHSVQSSLALSPHAYLGSPSPAKSRPSLPTSPTHIQAMRHATQQKQFGGSNLNSLLGGANGGGVVGGGGGGGGGVGQGPQNSPVSLGIISPTGSDMGIMLAPPQSSKNSAIMQTISPQQQQQQQQQQQQQHQQQQQQQQQQQQQQQQQLGGLEFGSAGLDLNGFCGSPDSFHSGQMNPPSIQSSMSGSSPSTNMLSPSSQHNQQAFYQYLTPSSQHSGGHTPQHLVQTLDSYPTPSPESPGHWSSSSPRSNSDWSEGVQSPAANNLYISGGHQANKGSEAIYI.

The signal sequence occupies residues 1–52; the sequence is MQSQRSRRRSRAPNTWICFWINKMHAVASLPASLPLLLLTLAFANLPNTVRG. The Extracellular segment spans residues 53–1745; it reads TDTALVAASC…NGEPPANVKY (1693 aa). EGF-like domains are found at residues 58–95, 96–136, 139–176, and 177–215; these read VAASCTSVGCQNGGTCVTQLNGKTYCACDSHYVGDYCE, HRNP…SLCE, VPNACDHVTCLNGGTCQLKTLEEYTCACANGYTGERCE, and TKNLCASSPCRNGATCTALAGSSSFTCSCPPGFTGDTCS. 24 disulfides stabilise this stretch: Cys62–Cys73, Cys67–Cys83, Cys85–Cys94, Cys100–Cys111, Cys105–Cys124, Cys126–Cys135, Cys143–Cys154, Cys148–Cys164, Cys166–Cys175, Cys181–Cys192, Cys186–Cys203, Cys205–Cys214, Cys221–Cys232, Cys226–Cys241, Cys243–Cys252, Cys259–Cys270, Cys264–Cys279, Cys281–Cys290, Cys297–Cys308, Cys302–Cys317, Cys319–Cys328, Cys335–Cys349, Cys343–Cys358, and Cys360–Cys369. Residue Thr72 is glycosylated (O-linked (Fuc...) threonine). A glycan (O-linked (Fuc...) threonine) is linked at Thr110. Thr153 is a glycosylation site (O-linked (Fuc...) threonine). O-linked (Glc...) serine glycosylation occurs at Ser183. O-linked (Fuc...) threonine glycosylation is present at Thr191. Thr210 is a glycosylation site (O-linked (GlcNAc...) threonine). The region spanning 217 to 253 is the EGF-like 5; calcium-binding domain; it reads DIEECQSNPCKYGGTCVNTHGSYQCMCPTGYTGKDCD. O-linked (Glc...) serine glycosylation is present at Ser223. O-linked (Fuc...) threonine glycosylation is present at Thr231. Residues 255-291 form the EGF-like 6 domain; it reads KYKPCSPSPCQNGGICRSNGLSYECKCPKGFEGKNCE. Residues 293–329 form the EGF-like 7; calcium-binding domain; it reads NYDDCLGHLCQNGGTCIDGISDYTCRCPPNFTGRFCQ. O-linked (Fuc...) threonine glycosylation is present at Thr307. The N-linked (GlcNAc...) asparagine glycan is linked to Asn322. In terms of domain architecture, EGF-like 8; calcium-binding spans 331–370; sequence DVDECAQRDHPVCQNGATCTNTHGSYSCICVNGWAGLDCS. Thr348 carries an O-linked (Fuc...) threonine glycan. Asn371 carries N-linked (GlcNAc...) asparagine glycosylation. In terms of domain architecture, EGF-like 9; calcium-binding spans 372-408; it reads NTDDCKQAACFYGATCIDGVGSFYCQCTKGKTGLLCH. 8 disulfides stabilise this stretch: Cys376–Cys387, Cys381–Cys396, Cys398–Cys407, Cys413–Cys424, Cys418–Cys435, Cys437–Cys446, Cys453–Cys465, and Cys459–Cys474. Thr386 is a glycosylation site (O-linked (Fuc...) threonine). The region spanning 409–447 is the EGF-like 10 domain; sequence LDDACTSNPCHADAICDTSPINGSYACSCATGYKGVDCS. Ser427 is a glycosylation site (O-linked (Glc...) serine). Residue Asn430 is glycosylated (N-linked (GlcNAc...) asparagine). Residues 449–486 form the EGF-like 11; calcium-binding domain; sequence DIDECDQGSPCEHNGICVNTPGSYRCNCSQGFTGPRCE. Asn475 carries an N-linked (GlcNAc...) asparagine glycan. Disulfide bonds link Cys476–Cys485, Cys492–Cys503, Cys497–Cys512, Cys514–Cys523, Cys530–Cys541, Cys535–Cys550, Cys552–Cys561, Cys568–Cys579, Cys573–Cys588, Cys590–Cys599, Cys606–Cys616, Cys611–Cys625, Cys627–Cys636, Cys643–Cys654, Cys648–Cys663, Cys665–Cys674, Cys681–Cys692, Cys686–Cys701, Cys703–Cys712, Cys719–Cys730, Cys724–Cys739, Cys741–Cys750, Cys757–Cys768, Cys762–Cys777, Cys779–Cys788, Cys795–Cys806, Cys800–Cys815, Cys817–Cys826, Cys833–Cys844, Cys838–Cys853, Cys855–Cys864, Cys871–Cys882, Cys876–Cys893, Cys895–Cys904, Cys911–Cys923, Cys917–Cys932, Cys934–Cys943, Cys950–Cys961, Cys955–Cys970, Cys972–Cys981, Cys988–Cys999, Cys993–Cys1008, Cys1010–Cys1019, Cys1026–Cys1037, Cys1031–Cys1046, Cys1048–Cys1057, Cys1064–Cys1075, Cys1069–Cys1084, Cys1086–Cys1095, Cys1102–Cys1113, Cys1107–Cys1122, Cys1124–Cys1133, Cys1155–Cys1160, Cys1171–Cys1180, Cys1187–Cys1198, Cys1192–Cys1207, Cys1209–Cys1218, Cys1225–Cys1236, Cys1230–Cys1245, Cys1247–Cys1256, Cys1263–Cys1274, Cys1268–Cys1283, Cys1285–Cys1294, Cys1301–Cys1314, Cys1306–Cys1323, Cys1325–Cys1334, Cys1341–Cys1352, Cys1346–Cys1361, Cys1363–Cys1372, Cys1379–Cys1389, Cys1384–Cys1400, Cys1402–Cys1411, Cys1419–Cys1430, Cys1424–Cys1439, Cys1441–Cys1450, Cys1482–Cys1505, Cys1487–Cys1500, and Cys1496–Cys1512. Thr481 is a glycosylation site (O-linked (GlcNAc...) threonine). Positions 488-524 constitute an EGF-like 12; calcium-binding domain; sequence NINECESHPCQNEGSCLDDPGTFRCVCMPGFTGTQCE. An O-linked (Glc...) serine glycan is attached at Ser494. Ser502 carries an O-linked (Fuc...) serine glycan. Residue Thr519 is glycosylated (O-linked (GlcNAc...) threonine). In terms of domain architecture, EGF-like 13; calcium-binding spans 526-562; sequence DIDECQSNPCLNDGTCHDKINGFKCSCALGFTGARCQ. Ser532 is a glycosylation site (O-linked (Glc...) serine). Positions 564-600 constitute an EGF-like 14; calcium-binding domain; sequence NIDDCQSQPCRNRGICHDSIAGYSCECPPGYTGTSCE. Residue Ser570 is glycosylated (O-linked (Glc...) serine). The O-linked (GlcNAc...) threonine glycan is linked to Thr595. An EGF-like 15; calcium-binding domain is found at 602–637; sequence NINDCDSNPCHRGKCIDDVNSFKCLCDPGYTGYICQ. A glycan (O-linked (Glc...) serine) is linked at Ser608. Residues 639 to 675 enclose the EGF-like 16; calcium-binding domain; the sequence is QINECESNPCQFDGHCQDRVGSYYCQCQAGTSGKNCE. O-linked (Glc...) serine glycosylation occurs at Ser645. One can recognise an EGF-like 17; calcium-binding domain in the interval 677 to 713; the sequence is NVNECHSNPCNNGATCIDGINSYKCQCVPGFTGQHCE. O-linked (Glc...) serine glycosylation occurs at Ser683. Thr691 carries O-linked (Fuc...) threonine glycosylation. One can recognise an EGF-like 18; calcium-binding domain in the interval 715–751; the sequence is NVDECISSPCANNGVCIDQVNGYKCECPRGFYDAHCL. An O-linked (Glc...) serine glycan is attached at Ser721. The EGF-like 19; calcium-binding domain occupies 753-789; that stretch reads DVDECASNPCVNEGRCEDGINEFICHCPPGYTGKRCE. An O-linked (Glc...) serine glycan is attached at Ser759. Positions 791–827 constitute an EGF-like 20; calcium-binding domain; the sequence is DIDECSSNPCQHGGTCYDKLNAFSCQCMPGYTGQKCE. The O-linked (Glc...) serine glycan is linked to Ser797. Thr805 carries O-linked (Fuc...) threonine glycosylation. O-linked (GlcNAc...) threonine glycosylation occurs at Thr822. The EGF-like 21; calcium-binding domain occupies 829 to 865; sequence NIDDCVTNPCGNGGTCIDKVNGYKCVCKVPFTGRDCE. Thr843 carries O-linked (Fuc...) threonine glycosylation. The 39-residue stretch at 867–905 folds into the EGF-like 22 domain; it reads KMDPCASNRCKNEAKCTPSSNFLDFSCTCKLGYTGRYCD. Residues 907-944 enclose the EGF-like 23; calcium-binding domain; it reads DIDECSLSSPCRNGASCLNVPGSYRCLCTKGYEGRDCA. A glycan (O-linked (Fuc...) serine) is linked at Ser922. Positions 946–982 constitute an EGF-like 24; calcium-binding domain; sequence NTDDCASFPCQNGGTCLDGIGDYSCLCVDGFDGKHCE. The O-linked (Glc...) serine glycan is linked to Ser952. O-linked (Fuc...) threonine glycosylation is present at Thr960. Residues 984 to 1020 form the EGF-like 25 domain; the sequence is DINECLSQPCQNGATCSQYVNSYTCTCPLGFSGINCQ. Ser990 is a glycosylation site (O-linked (Glc...) serine). Thr998 carries O-linked (Fuc...) threonine glycosylation. The EGF-like 26; calcium-binding domain occupies 1022 to 1058; the sequence is NDEDCTESSCLNGGSCIDGINGYNCSCLAGYSGANCQ. O-linked (Fuc...) serine glycosylation occurs at Ser1036. The N-linked (GlcNAc...) asparagine glycan is linked to Asn1045. 3 consecutive EGF-like domains span residues 1060-1096, 1098-1134, and 1136-1181; these read KLNKCDSNPCLNGATCHEQNNEYTCHCPSGFTGKQCS, YVDWCGQSPCENGATCSQMKHQFSCKCSAGWTGKLCD, and QTIS…SYCQ. Ser1066 is a glycosylation site (O-linked (Glc...) serine). Thr1074 carries O-linked (Fuc...) threonine glycosylation. Thr1112 carries an O-linked (Fuc...) threonine glycan. An N-linked (GlcNAc...) asparagine glycan is attached at Asn1157. Residues 1183 to 1219 form the EGF-like 30; calcium-binding domain; that stretch reads EIDECQSQPCQNGGTCRDLIGAYECQCRQGFQGQNCE. The O-linked (Glc...) serine glycan is linked to Ser1189. Thr1197 carries O-linked (Fuc...) threonine glycosylation. The EGF-like 31; calcium-binding domain maps to 1221–1257; it reads NIDDCAPNPCQNGGTCHDRVMNFSCSCPPGTMGIICE. A glycan (O-linked (Fuc...) threonine) is linked at Thr1235. Residue Asn1242 is glycosylated (N-linked (GlcNAc...) asparagine). The EGF-like 32; calcium-binding domain maps to 1259 to 1295; that stretch reads NKDDCKPGACHNNGSCIDRVGGFECVCQPGFVGARCE. N-linked (GlcNAc...) asparagine glycosylation is present at Asn1271. Ser1273 carries an O-linked (Fuc...) serine glycan. EGF-like domains follow at residues 1297 to 1335, 1337 to 1373, 1375 to 1412, and 1415 to 1451; these read DINECLSNPCSNAGTLDCVQLVNNYHCNCRPGHMGRHCE, KVDFCAQSPCQNGGNCNIRQSGHHCICNNGFYGKNCE, SGQDCDSNPCRVGNCVVADEGFGYRCECPRGTLGEHCE, and TLDECSPNPCAQGAACEDLLGDYECLCPSKWKGKRCD. Ser1303 carries an O-linked (Glc...) serine glycan. The O-linked (Glc...) serine glycan is linked to Ser1381. 3 LNR repeats span residues 1482-1521, 1522-1557, and 1559-1599; these read CDKRGCTEKQGNGICDSDCNTYACNFDGNDCSLGINPWAN, CTANECWNKFKNGKCNEECNNAACHYDGHDCERKLK, and CDSL…TQSP. Asn1521 carries an N-linked (GlcNAc...) asparagine glycan. 6 cysteine pairs are disulfide-bonded: Cys1522–Cys1545, Cys1527–Cys1540, Cys1536–Cys1552, Cys1559–Cys1585, Cys1567–Cys1580, and Cys1576–Cys1592. 2 N-linked (GlcNAc...) asparagine glycosylation sites follow: Asn1594 and Asn1627. Residues 1746–1766 form a helical membrane-spanning segment; that stretch reads VITGIILVIIALAFFGMVLST. At 1767-2703 the chain is on the cytoplasmic side; that stretch reads QRKRAHGVTW…ANKGSEAIYI (937 aa). Residues 1810-1850 form a disordered region; sequence QSQGVGQPGAHWSDDESDMPLPKRQRSDPVSGVGLGNNGGY. ANK repeat units follow at residues 1901 to 1945, 1950 to 1979, 1983 to 2013, 2017 to 2046, 2050 to 2079, 2083 to 2112, and 2116 to 2139; these read CGLT…ELNA, TGETSLHLAARFARADAAKRLLDAGADANC, TGRTPLHAAVAADAMGVFQILLRNRATNLNA, DGTTPLILAARLAIEGMVEDLITADADINA, SGKTALHWAAAVNNTEAVNILLMHHANRDA, KDETPLFLAAREGSYEACKALLDNFANREI, and MDRLPRDVASERLHHDIVRLLDEH. The interval 2172–2257 is disordered; it reads TVISAGNGGN…LTGGVSGVPG (86 aa). Residues 2228–2238 show a composition bias toward low complexity; sequence KKTSAASKKAA. The tract at residues 2325–2328 is interaction with Nedd4; the sequence is PPSY. Disordered stretches follow at residues 2399–2452, 2488–2524, 2579–2620, and 2632–2703; these read SGAG…PTSP, GGGGGGGVGQGPQNSPVSLGIISPTGSDMGIMLAPPQ, LDLN…PSSQ, and PSSQ…AIYI. Residues 2414-2429 are compositionally biased toward polar residues; sequence PYSNQSPPHSVQSSLA. Ser2447 carries the phosphoserine modification. The segment covering 2488–2497 has biased composition (gly residues); it reads GGGGGGGVGQ. A compositionally biased stretch (low complexity) spans 2598–2619; sequence PPSIQSSMSGSSPSTNMLSPSS. The segment covering 2632–2653 has biased composition (polar residues); that stretch reads PSSQHSGGHTPQHLVQTLDSYP. Low complexity predominate over residues 2659–2675; it reads SPGHWSSSSPRSNSDWS. The segment covering 2677–2687 has biased composition (polar residues); sequence GVQSPAANNLY.

The protein belongs to the NOTCH family. Homomer. Interacts with Su(H) when activated. Interacts with Dx via its ANK repeats. Interacts with Delta via the EGF repeats and the Delta EGF repeats. Interacts with Nedd4 and Su(dx). Interacts with O-fut1; the interaction glycosylates N and transports N to early endosomes. Interacts with Akap200; the interaction stabilizes N/Notch protein levels by preventing Cbl-mediated ubiquitination and subsequent lysosomal degradation of N/Notch. In terms of processing, upon binding its ligands such as Delta or Serrate, it is cleaved (S2 cleavage) in its extracellular domain, close to the transmembrane domain. S2 cleavage is probably mediated by Kuz. It is then cleaved (S3 cleavage) downstream of its transmembrane domain, releasing it from the cell membrane. S3 cleavage requires Psn. O-glycosylated. Three forms of O-glycosylation (O-fucosylation, O-glucosylation and O-GlcNAcylation) are detected. O-fucosylated by O-fut1 and fng in the EGF repeat domain inhibits both Serrate/Ser- and Delta/Dl-binding. O-glucosylation by rumi in the endoplasmic reticulum is necessary for correct folding and signaling. Post-translationally, ubiquitinated by various ubiquitin ligases; which promotes ligand-independent endocytosis and proteasomal degradation. Ubiquitinated by Nedd4. May also be ubiquitinated by Su(dx) and Cbl. Mono-ubiquitinated, possibly by dx/deltex; this may be involved in the ESCRT-III mediated targeting to multivesicular bodies.

It is found in the cell membrane. Its subcellular location is the endosome. The protein localises to the multivesicular body. It localises to the nucleus. In terms of biological role, essential signaling protein which has a major role in many developmental processes. Functions as a receptor for membrane-bound ligands Delta and Serrate to regulate cell-fate determination. Upon ligand activation, and releasing from the cell membrane, the Notch intracellular domain (NICD) forms a transcriptional activator complex with Su(H) (Suppressor of hairless) and activates genes of the E(spl) complex. Regulates oogenesis, the differentiation of the ectoderm and the development of the central and peripheral nervous system, eye, wing disk, muscles and segmental appendages such as antennae and legs, through lateral inhibition or induction. Regulates neuroblast self-renewal, identity and proliferation through the regulation of bHLH-O proteins; in larval brains, involved in the maintenance of type II neuroblast self-renewal and identity by suppressing erm expression together with pnt; might also regulate dpn expression through the activation of the transcriptional regulator Su(H). Targeted for ESCRT-mediated endosomal sequestration and lysosomal degradation by various E3 ubiquitin ligases to regulate the Notch signaling pathway. Can undergo ligand-dependent and non-canonical ligand-independent activation. Ligand-independent activation is dependent on endosome acidification and probably occurs in late endosomes or lysosome. Ectopic ligand-independent activation occurs when disruption of the endolysosomal pathway, particularly of the ESCRT-III complex, prevents sequestration of the receptor in intraluminal vesicles of multivesicular bodies. The protein is Neurogenic locus Notch protein of Drosophila melanogaster (Fruit fly).